Here is a 931-residue protein sequence, read N- to C-terminus: Myocardin-related transcription factor A (931 aa).

A mediates interaction with SCAI and ACTB region spans residues 1–256; that stretch reads MPPLKSPAAF…KQDRGAPPMD (256 aa). Serine 6 is modified (phosphoserine). Residues 6-23 form an intervening spacer sequence 1 region; the sequence is SPAAFHEQRRSLERARTE. The stretch at 24 to 49 is one RPEL 1 repeat; sequence DYLKRKIRSRPERSELVRMHILEETS. A Bipartite Nuclear localization signal motif is present at residues 27 to 65; it reads KRKIRSRPERSELVRMHILEETSAEPSLQAKQLKLKRAR. An intervening spacer sequence 2 region spans residues 50–67; it reads AEPSLQAKQLKLKRARLA. Residues 68–93 form an RPEL 2 repeat; sequence DDLNEKIAQRPGPMELVEKNILPVES. Disordered regions lie at residues 110–256 and 290–344; these read ADSS…PPMD and PAPP…GALP. Residues serine 124, serine 139, and serine 156 each carry the phosphoserine modification. Over residues 151 to 162 the composition is skewed to polar residues; the sequence is SATSASPTQVVS. Positions 180 to 189 are enriched in pro residues; sequence PPLPPPPLLP. A compositionally biased stretch (polar residues) spans 191–215; that stretch reads SLTNGTTIPTAKSTPTLIKQSQPKS. A compositionally biased stretch (basic and acidic residues) spans 216-231; it reads ASEKSQRSKKAKELKP. Threonine 305 is subject to Phosphothreonine. 2 positions are modified to phosphoserine: serine 310 and serine 312. Low complexity predominate over residues 310–320; it reads SLSTTNSSSSS. Threonine 313 is modified (phosphothreonine). 3 positions are modified to phosphoserine: serine 317, serine 320, and serine 333. Residues 347–381 form the SAP domain; sequence LDDMKVAELKQELKLRSLPVSGTKTELIERLRAYQ. Phosphoserine is present on residues serine 385 and serine 446. A disordered region spans residues 444 to 476; the sequence is FGSTGSTPPVSPTPSERSLLSTGDENSTPGDTF. Threonine 447 carries the phosphothreonine modification. The residue at position 449 (serine 449) is a Phosphoserine. A Phosphothreonine modification is found at threonine 450. Serine 454 bears the Phosphoserine mark. Threonine 456 bears the Phosphothreonine mark. A Phosphoserine modification is found at serine 458. Positions 459–473 are enriched in polar residues; sequence ERSLLSTGDENSTPG. Phosphoserine occurs at positions 482, 492, 507, and 511. Residues 515-563 are a coiled coil; it reads RAELEGRDKDQMLQEKDKQIEALTRMLRQKQQLVERLKLQLEQEKRAQQ. 3 disordered regions span residues 558 to 577, 674 to 746, and 763 to 816; these read EKRA…PVKQ, KNAD…SSSQ, and ADFK…RLED. The span at 678–694 shows a compositional bias: low complexity; sequence SPGLSSGSPQQPSSQPG. 3 positions are modified to phosphoserine: serine 685, serine 691, and serine 695. A compositionally biased stretch (polar residues) spans 732 to 746; sequence MSQQPKQQENGSSSQ. The span at 763-778 shows a compositional bias: basic and acidic residues; sequence ADFKEPPSLPGKEKPS. Low complexity predominate over residues 784–799; that stretch reads GSPLAAQPSPSAELPQ. Serine 792, serine 807, and serine 859 each carry phosphoserine.

As to quaternary structure, interacts with SRF, forming the SRF-MRTFA nuclear complex which binds the 5'-CArG-3' consensus motif (CArG box) on DNA via SRF. Interacts (via RPEL repeats) with globular actin (G-actin), thereby regulating its subcellular location and activity of the complex formed with SRF. Either forms a trivalent (by binding three G-actin monomers) or pentavalent (by binding five G-actin monomers) complex with G-actin. Forms a nuclear ternary complex with SCAI and SRF, leading to suppress MRTFA-induced SRF transcriptional activity. Interacts with beta-actin (ACTB); interaction with ACTB prevents interaction with SCAI. Interacts with MRTFB. Post-translationally, phosphorylation at Ser-6 by Erk inhibits binding of globular actin (G-actin), unmasking the nuclear localization signal (NLS) and promoting nuclear import. In terms of tissue distribution, ubiquitously expressed, has been detected in lung, placenta, small intestine, liver, kidney, spleen, thymus, colon, muscle, heart and brain. Expressed in peripheral blood mononuclear cells (at protein level).

It is found in the cytoplasm. The protein resides in the nucleus. Functionally, transcription coactivator that associates with the serum response factor (SRF) transcription factor to control expression of genes regulating the cytoskeleton during development, morphogenesis and cell migration. The SRF-MRTFA complex activity responds to Rho GTPase-induced changes in cellular globular actin (G-actin) concentration, thereby coupling cytoskeletal gene expression to cytoskeletal dynamics. MRTFA binds G-actin via its RPEL repeats, regulating activity of the MRTFA-SRF complex. Activity is also regulated by filamentous actin (F-actin) in the nucleus. The chain is Myocardin-related transcription factor A from Homo sapiens (Human).